The sequence spans 146 residues: Large ribosomal subunit protein uL16 (146 aa).

It belongs to the universal ribosomal protein uL16 family. Part of the 50S ribosomal subunit.

Its function is as follows. Binds 23S rRNA and is also seen to make contacts with the A and possibly P site tRNAs. The polypeptide is Large ribosomal subunit protein uL16 (Thermomicrobium roseum (strain ATCC 27502 / DSM 5159 / P-2)).